Reading from the N-terminus, the 323-residue chain is tRNA dimethylallyltransferase (323 aa).

An ATP-binding site is contributed by 12–19; it reads GPTAAGKT. 14 to 19 provides a ligand contact to substrate; the sequence is TAAGKT. Interaction with substrate tRNA regions lie at residues 37–40 and 161–165; these read DSAL and QRLSR.

This sequence belongs to the IPP transferase family. In terms of assembly, monomer. Mg(2+) serves as cofactor.

It catalyses the reaction adenosine(37) in tRNA + dimethylallyl diphosphate = N(6)-dimethylallyladenosine(37) in tRNA + diphosphate. Catalyzes the transfer of a dimethylallyl group onto the adenine at position 37 in tRNAs that read codons beginning with uridine, leading to the formation of N6-(dimethylallyl)adenosine (i(6)A). This is tRNA dimethylallyltransferase from Pseudomonas fluorescens (strain Pf0-1).